A 209-amino-acid polypeptide reads, in one-letter code: Transcription antitermination protein NusB (209 aa).

The protein belongs to the NusB family.

Its function is as follows. Involved in transcription antitermination. Required for transcription of ribosomal RNA (rRNA) genes. Binds specifically to the boxA antiterminator sequence of the ribosomal RNA (rrn) operons. This Crocosphaera subtropica (strain ATCC 51142 / BH68) (Cyanothece sp. (strain ATCC 51142)) protein is Transcription antitermination protein NusB.